A 1016-amino-acid chain; its full sequence is Mastermind-like protein 1 (1016 aa).

The interval 1-123 (MVLPTCPMAE…NLDSATSPQN (123 aa)) is required for interaction with NOTCH proteins. Serine 45 is modified (phosphoserine). 5 disordered regions span residues 65-184 (QAKA…LGLD), 263-487 (PDED…PSHV), 561-617 (KPKP…SQQQ), 658-681 (EKQQFQRHLTRPPPQYQDPTQGSF), and 796-953 (AYGQ…GGRA). The span at 67–76 (KAKRAGKHRQ) shows a compositional bias: basic residues. Positions 93 to 115 (DAADGPEHGRPATHLHDTVKRNL) are enriched in basic and acidic residues. Over residues 116-129 (DSATSPQNGDQQNG) the composition is skewed to polar residues. Position 120 is a phosphoserine (serine 120). Residues 263 to 282 (PDEDMKDLFNEDFEEKKDPE) show a composition bias toward basic and acidic residues. Positions 283–292 (SSGSATQTPL) are enriched in polar residues. A phosphoserine mark is found at serine 303 and serine 314. Over residues 322–353 (AGQTFLGPSSAPVSTDSPSLGGSQTLFHTSGQ) the composition is skewed to polar residues. Phosphoserine is present on serine 360. Over residues 392–403 (ELSSAHQLQQIA) the composition is skewed to polar residues. The span at 413–426 (QNPQQATPAPAPGQ) shows a compositional bias: low complexity. Composition is skewed to polar residues over residues 427 to 439 (MSTWQQTGPSHSS), 451 to 463 (SPSSYKQDFTNSK), 577 to 595 (QEQNPSSVPVQAQATSVGT), and 602 to 617 (VASSHNSSPYLSSQQQ). The segment covering 801–810 (SLGSSGLSQQ) has biased composition (low complexity). Lysine 822 carries the N6-acetyllysine modification. Polar residues predominate over residues 834-885 (GQNSSWQHQGMPNLSGQTPGNSNVSPFTAASSFHMQQQAHLKMSSPQFSQAV). Serine 1015 carries the post-translational modification Phosphoserine.

This sequence belongs to the mastermind family. As to quaternary structure, interacts (via N-terminus) with NOTCH1, NOTCH2, NOTCH3 and NOTCH4 (via ankyrin repeat region). Interacts (via N-terminus) with p53 (via DNA-binding region). Forms a DNA-binding complex with Notch proteins and RBPSUH/RBP-J kappa/CBF1. Also binds CREBBP/CBP and CDK8. Forms a complex with PRAG1, NOTCH1 and MAML1, in a MAML1-dependent manner. As to expression, widely expressed with highest levels in heart, pancreas, peripheral blood leukocytes and spleen.

The protein localises to the nucleus speckle. Functionally, acts as a transcriptional coactivator for NOTCH proteins. Has been shown to amplify NOTCH-induced transcription of HES1. Enhances phosphorylation and proteolytic turnover of the NOTCH intracellular domain in the nucleus through interaction with CDK8. Binds to CREBBP/CBP which promotes nucleosome acetylation at NOTCH enhancers and activates transcription. Induces phosphorylation and localization of CREBBP to nuclear foci. Plays a role in hematopoietic development by regulating NOTCH-mediated lymphoid cell fate decisions. The chain is Mastermind-like protein 1 from Homo sapiens (Human).